The sequence spans 204 residues: Large ribosomal subunit protein bL25 (204 aa).

Belongs to the bacterial ribosomal protein bL25 family. CTC subfamily. In terms of assembly, part of the 50S ribosomal subunit; part of the 5S rRNA/L5/L18/L25 subcomplex. Contacts the 5S rRNA. Binds to the 5S rRNA independently of L5 and L18.

This is one of the proteins that binds to the 5S RNA in the ribosome where it forms part of the central protuberance. The chain is Large ribosomal subunit protein bL25 from Rhizobium etli (strain ATCC 51251 / DSM 11541 / JCM 21823 / NBRC 15573 / CFN 42).